Reading from the N-terminus, the 186-residue chain is ATP synthase subunit delta (186 aa).

This sequence belongs to the ATPase delta chain family. F-type ATPases have 2 components, F(1) - the catalytic core - and F(0) - the membrane proton channel. F(1) has five subunits: alpha(3), beta(3), gamma(1), delta(1), epsilon(1). F(0) has three main subunits: a(1), b(2) and c(10-14). The alpha and beta chains form an alternating ring which encloses part of the gamma chain. F(1) is attached to F(0) by a central stalk formed by the gamma and epsilon chains, while a peripheral stalk is formed by the delta and b chains.

It localises to the cell inner membrane. Its function is as follows. F(1)F(0) ATP synthase produces ATP from ADP in the presence of a proton or sodium gradient. F-type ATPases consist of two structural domains, F(1) containing the extramembraneous catalytic core and F(0) containing the membrane proton channel, linked together by a central stalk and a peripheral stalk. During catalysis, ATP synthesis in the catalytic domain of F(1) is coupled via a rotary mechanism of the central stalk subunits to proton translocation. Functionally, this protein is part of the stalk that links CF(0) to CF(1). It either transmits conformational changes from CF(0) to CF(1) or is implicated in proton conduction. The sequence is that of ATP synthase subunit delta from Leptospira borgpetersenii serovar Hardjo-bovis (strain JB197).